The chain runs to 441 residues: Malate dehydrogenase [NADP], chloroplastic (441 aa).

The N-terminal 58 residues, 1 to 58 (MALTQLNSTCSKPQLHSSSQLSFLSRTRTRTLPRHYHSTFAPLHRTQHARISCSVAPN), are a transit peptide targeting the chloroplast. C76 and C81 are oxidised to a cystine. Position 105–111 (105–111 (GAAGMIS)) interacts with NADP(+). Residues R186 and R192 each contribute to the substrate site. N199 is an NADP(+) binding site. Q206 is a binding site for NAD(+). 223 to 225 (VGN) provides a ligand contact to NADP(+). Substrate contacts are provided by N225 and R256. The active-site Proton acceptor is H281. An intrachain disulfide couples C417 to C429.

Belongs to the LDH/MDH superfamily. MDH type 2 family. Homodimer.

It is found in the plastid. It localises to the chloroplast. The enzyme catalyses (S)-malate + NADP(+) = oxaloacetate + NADPH + H(+). Chloroplast NADP-MDH is activated upon illumination. In order to be enzymatically active, disulfide bridges on the protein must be reduced by thioredoxin which receives electrons from ferredoxin and the electron transport system of photosynthesis. In terms of biological role, the chloroplastic, NADP-dependent form is essential for the photosynthesis C4 cycle, which allows plants to circumvent the problem of photorespiration. In C4 plants, NADP-MDH activity acts to convert oxaloacetate to malate in chloroplasts of mesophyll cells for transport to the bundle sheath cells. The polypeptide is Malate dehydrogenase [NADP], chloroplastic (Pisum sativum (Garden pea)).